The following is a 198-amino-acid chain: Small ribosomal subunit protein uS4 (198 aa).

Residues 26–45 form a disordered region; it reads LKKRPYAPGQHGQRRSKLSN. The S4 RNA-binding domain maps to 91-154; that stretch reads SRLDNVVYRL…KNLTIVKEAL (64 aa).

The protein belongs to the universal ribosomal protein uS4 family. As to quaternary structure, part of the 30S ribosomal subunit. Contacts protein S5. The interaction surface between S4 and S5 is involved in control of translational fidelity.

One of the primary rRNA binding proteins, it binds directly to 16S rRNA where it nucleates assembly of the body of the 30S subunit. Functionally, with S5 and S12 plays an important role in translational accuracy. The sequence is that of Small ribosomal subunit protein uS4 from Acholeplasma laidlawii (strain PG-8A).